The primary structure comprises 258 residues: Phosphoribosylformylglycinamidine synthase subunit PurQ (258 aa).

The 232-residue stretch at 7–238 (IGILLMEGTN…QAMYLETEKD (232 aa)) folds into the Glutamine amidotransferase type-1 domain. C97 functions as the Nucleophile in the catalytic mechanism. Catalysis depends on residues H220 and E222.

Part of the FGAM synthase complex composed of 1 PurL, 1 PurQ and 2 PurS subunits.

The protein resides in the cytoplasm. The enzyme catalyses N(2)-formyl-N(1)-(5-phospho-beta-D-ribosyl)glycinamide + L-glutamine + ATP + H2O = 2-formamido-N(1)-(5-O-phospho-beta-D-ribosyl)acetamidine + L-glutamate + ADP + phosphate + H(+). It catalyses the reaction L-glutamine + H2O = L-glutamate + NH4(+). The protein operates within purine metabolism; IMP biosynthesis via de novo pathway; 5-amino-1-(5-phospho-D-ribosyl)imidazole from N(2)-formyl-N(1)-(5-phospho-D-ribosyl)glycinamide: step 1/2. Part of the phosphoribosylformylglycinamidine synthase complex involved in the purines biosynthetic pathway. Catalyzes the ATP-dependent conversion of formylglycinamide ribonucleotide (FGAR) and glutamine to yield formylglycinamidine ribonucleotide (FGAM) and glutamate. The FGAM synthase complex is composed of three subunits. PurQ produces an ammonia molecule by converting glutamine to glutamate. PurL transfers the ammonia molecule to FGAR to form FGAM in an ATP-dependent manner. PurS interacts with PurQ and PurL and is thought to assist in the transfer of the ammonia molecule from PurQ to PurL. The protein is Phosphoribosylformylglycinamidine synthase subunit PurQ of Thermoplasma volcanium (strain ATCC 51530 / DSM 4299 / JCM 9571 / NBRC 15438 / GSS1).